A 145-amino-acid chain; its full sequence is uncharacterized protein (145 aa).

Residues 1-26 (MAILLPLKSILPWCCITFSFLLSSSG) form the signal peptide.

This is an uncharacterized protein from Saccharomyces cerevisiae (strain ATCC 204508 / S288c) (Baker's yeast).